Consider the following 628-residue polypeptide: tRNA uridine 5-carboxymethylaminomethyl modification enzyme MnmG (628 aa).

13-18 (GAGHAG) lines the FAD pocket. NAD(+) is bound at residue 273–287 (GPRYCPSIEDKIVRF).

The protein belongs to the MnmG family. Homodimer. Heterotetramer of two MnmE and two MnmG subunits. The cofactor is FAD.

The protein resides in the cytoplasm. NAD-binding protein involved in the addition of a carboxymethylaminomethyl (cmnm) group at the wobble position (U34) of certain tRNAs, forming tRNA-cmnm(5)s(2)U34. The protein is tRNA uridine 5-carboxymethylaminomethyl modification enzyme MnmG of Buchnera aphidicola subsp. Acyrthosiphon pisum (strain 5A).